A 234-amino-acid chain; its full sequence is Purine nucleoside phosphorylase DeoD-type (234 aa).

H5 is an a purine D-ribonucleoside binding site. Phosphate is bound by residues G21, R25, R44, and 88 to 91; that span reads RIGT. Residues 180–182 and 204–205 each bind a purine D-ribonucleoside; these read DME and SD. D205 serves as the catalytic Proton donor.

The protein belongs to the PNP/UDP phosphorylase family. Homohexamer; trimer of homodimers.

It carries out the reaction a purine D-ribonucleoside + phosphate = a purine nucleobase + alpha-D-ribose 1-phosphate. It catalyses the reaction a purine 2'-deoxy-D-ribonucleoside + phosphate = a purine nucleobase + 2-deoxy-alpha-D-ribose 1-phosphate. In terms of biological role, catalyzes the reversible phosphorolytic breakdown of the N-glycosidic bond in the beta-(deoxy)ribonucleoside molecules, with the formation of the corresponding free purine bases and pentose-1-phosphate. The sequence is that of Purine nucleoside phosphorylase DeoD-type from Buchnera aphidicola subsp. Acyrthosiphon pisum (strain APS) (Acyrthosiphon pisum symbiotic bacterium).